Consider the following 4467-residue polypeptide: Protocadherin-like protein (4467 aa).

Residues 1–22 form the signal peptide; it reads MRGINAIVGFLLCFCLLHRINT. 28 consecutive Cadherin domains span residues 23 to 128, 129 to 238, 239 to 350, 351 to 455, 459 to 566, 567 to 664, 665 to 764, 765 to 884, 885 to 994, 1092 to 1197, 1290 to 1395, 1396 to 1499, 1495 to 1597, 1601 to 1701, 1793 to 1891, 1892 to 1992, 1993 to 2100, 2101 to 2202, 2203 to 2312, 2313 to 2423, 2425 to 2529, 2530 to 2639, 2640 to 2746, 2747 to 2849, 2850 to 2954, 2955 to 3062, 3063 to 3170, and 3173 to 3288; these read AVQF…SPTF, PQHL…SPVF, EKKS…VPVF, QEES…TPVF, NPQQ…NPDF, SKVV…PPTF, KNAP…PPTF, SRSS…SPEF, SQTS…PPLF, EAQP…QPRF, SRTV…SPKF, SADS…PPKF, GPPK…EPQF, SNGF…QPVR, TMID…KPQF, SESA…YPKF, EPNL…KPQF, LESD…RPVF, TDCP…FPFF, LTRT…PPAF, PSAV…TPTF, KLEE…PPIF, PKPS…IPKF, DNLI…SPYF, PNPP…APVF, NPRE…PPVF, VPAE…GPWF, and RYYE…EPFD. Residues 23-4258 are Extracellular-facing; that stretch reads AVQFKQEILE…RPSSRWANPA (4236 aa). The EGF-like 1 domain maps to 3551-3589; it reads PDINCTTGTPCLHGGTCHNAVPKGIICECGRDYLGPECQ. Disulfide bonds link Cys3555–Cys3567, Cys3561–Cys3577, Cys3579–Cys3588, Cys3762–Cys3788, Cys3794–Cys3803, Cys3797–Cys3812, and Cys3814–Cys3823. A Laminin G-like 1 domain is found at 3590-3788; sequence STTRTFRGNS…LKEVNTELGC (199 aa). The EGF-like 2 domain maps to 3790-3824; it reads LNNQCPNCNGRGYCEPFWNYAICVCDLGFGGANCD. A Laminin G-like 2 domain is found at 3842 to 4096; sequence VKQVKRKRRE…KVIISSSGGS (255 aa). The tract at residues 4089–4118 is disordered; that stretch reads IISSSGGSVSGGSGGASGGSGGASGSGGSV. The segment covering 4096–4118 has biased composition (gly residues); it reads SVSGGSGGASGGSGGASGSGGSV. Positions 4206 to 4238 constitute an EGF-like 3 domain; the sequence is PCGSNFCRHGGTCVSADPPYCLCPVGWSGPVCE. Intrachain disulfides connect Cys4207/Cys4218, Cys4212/Cys4226, and Cys4228/Cys4237. Residues 4259-4279 form a helical membrane-spanning segment; sequence VIACILVILLAILVIIGAVLL. Residues 4280 to 4467 are Cytoplasmic-facing; that stretch reads KRRPQPAVVA…NLNRIFNEDE (188 aa). The interval 4424 to 4445 is disordered; the sequence is DVDDLSELGDSDEEPDEEEEQE.

As to expression, component of the acid-insoluble organic matrix of the aragonitic skeleton (at protein level).

The protein resides in the membrane. This chain is Protocadherin-like protein, found in Acropora millepora (Staghorn coral).